Reading from the N-terminus, the 255-residue chain is 3-dehydroquinate dehydratase (255 aa).

Residues 47-49 (EWR) and arginine 83 contribute to the 3-dehydroquinate site. Histidine 144 acts as the Proton donor/acceptor in catalysis. Lysine 171 acts as the Schiff-base intermediate with substrate in catalysis. 3-dehydroquinate-binding residues include arginine 214, serine 233, and glutamine 237.

It belongs to the type-I 3-dehydroquinase family. As to quaternary structure, homodimer or homotetramer.

It catalyses the reaction 3-dehydroquinate = 3-dehydroshikimate + H2O. It functions in the pathway metabolic intermediate biosynthesis; chorismate biosynthesis; chorismate from D-erythrose 4-phosphate and phosphoenolpyruvate: step 3/7. Functionally, involved in the third step of the chorismate pathway, which leads to the biosynthesis of aromatic amino acids. Catalyzes the cis-dehydration of 3-dehydroquinate (DHQ) and introduces the first double bond of the aromatic ring to yield 3-dehydroshikimate. The reaction involves the formation of an imine intermediate between the keto group of 3-dehydroquinate and the epsilon-amino group of Lys-170 at the active site. In Clostridioides difficile (strain 630) (Peptoclostridium difficile), this protein is 3-dehydroquinate dehydratase.